We begin with the raw amino-acid sequence, 278 residues long: MSEGKLIKRSVFFISDGTAITAETLGHSLLAQFPNVDFDIHIMPYITTEEAAMNIVEEINQCQSRDGTLPLVFDTLVDPNVREIINTSKAVNLDVFEGLISKLEQVLGTPPTTLVGQTHAVTDSEYYKARIDAVHFALDNDDGALTRHYDKADIILIGVSRSGKTPTSIYLSLQFGIRVANYPLTEEDLDDNRLPKVLKEHKNKLFGLMIDAERLVAIRTERKANSRYASYSQCQMELRAVEGIFISEGIPYLNVSEMSIEEISTRILQMTGLKRRIG.

Gly158–Thr165 is an ADP binding site.

This sequence belongs to the pyruvate, phosphate/water dikinase regulatory protein family. PSRP subfamily.

It catalyses the reaction [pyruvate, water dikinase] + ADP = [pyruvate, water dikinase]-phosphate + AMP + H(+). The catalysed reaction is [pyruvate, water dikinase]-phosphate + phosphate + H(+) = [pyruvate, water dikinase] + diphosphate. Functionally, bifunctional serine/threonine kinase and phosphorylase involved in the regulation of the phosphoenolpyruvate synthase (PEPS) by catalyzing its phosphorylation/dephosphorylation. This chain is Putative phosphoenolpyruvate synthase regulatory protein, found in Acinetobacter baylyi (strain ATCC 33305 / BD413 / ADP1).